Here is a 432-residue protein sequence, read N- to C-terminus: Serine/threonine-protein kinase CDG1 (432 aa).

Residues Cys4 and Cys6 are each lipidated (S-palmitoyl cysteine). Residues 15–24 (LKDKSHKRSI) show a composition bias toward basic residues. A disordered region spans residues 15 to 47 (LKDKSHKRSIRNQTSSSSAQPAGTAKEVDSSSS). Positions 25-35 (RNQTSSSSAQP) are enriched in polar residues. Residues Ser44 and Ser47 each carry the phosphoserine modification. One can recognise a Protein kinase domain in the interval 74 to 354 (FRNESLIGRG…SQVVECLKYI (281 aa)). ATP is bound by residues 80–88 (IGRGGFGTV) and Lys102. Tyr147 carries the phosphotyrosine modification. Asp200 serves as the catalytic Proton acceptor. Phosphoserine is present on residues Ser204 and Ser234. 2 positions are modified to phosphothreonine: Thr235 and Thr240. Tyr248 bears the Phosphotyrosine mark.

Belongs to the protein kinase superfamily. Ser/Thr protein kinase family. Interacts with BSU1, BSL1 and BRI1. Post-translationally, phosphorylated at Ser-44, Ser-47 and Ser-234 by BRI1. Expressed at high levels in the stamen and pollen grains. Expressed at a very low level in vegetative tissues.

It is found in the cell membrane. It catalyses the reaction L-seryl-[protein] + ATP = O-phospho-L-seryl-[protein] + ADP + H(+). The enzyme catalyses L-threonyl-[protein] + ATP = O-phospho-L-threonyl-[protein] + ADP + H(+). Activated by phosphorylation at Ser-234. In terms of biological role, serine/threonine-protein kinase involved in the positive regulation of brassinosteroid (BR) signaling and plant growth. Mediates BR signal transduction from BRI1 receptor kinase to BSU1 phosphatase. After activation by phosphorylation at Ser-234 by BRI1, CDG1 phosphorylates BSU1 at 'Ser-764' in the phosphatase domain, increasing the ability of BSU1 to inactivate the negative regulator of BR signaling ASK7/BIN2 by dephosphorylation at 'Tyr-200'. The full kinase activity of CDG1 is required for its biological function. This Arabidopsis thaliana (Mouse-ear cress) protein is Serine/threonine-protein kinase CDG1.